Reading from the N-terminus, the 415-residue chain is Beta-2 adrenergic receptor (415 aa).

The Extracellular portion of the chain corresponds to 1–34 (MGQPANRSVFLLAPNGSHAPDQGDSQERSEAWVV). Asn6 and Asn15 each carry an N-linked (GlcNAc...) asparagine glycan. A helical membrane pass occupies residues 35–58 (GMGIVMSLIVLAIVFGNVLVITAI). The Cytoplasmic segment spans residues 59–71 (ARFERLQTVTNYF). Residues 72 to 95 (ITSLACADLVMGLAVVPFGASHIL) form a helical membrane-spanning segment. The Extracellular portion of the chain corresponds to 96–106 (MKMWTFGNFWC). Disulfide bonds link Cys106/Cys191 and Cys184/Cys190. The helical transmembrane segment at 107–129 (EFWTSIDVLCVTASIETLCVIAV) threads the bilayer. The Cytoplasmic segment spans residues 130 to 150 (DRYFAITSPFKYQSLLTKNKA). The residue at position 141 (Tyr141) is a Phosphotyrosine. Residues 151 to 174 (RVVILMVWIVSGLTSFLPIQMHWY) traverse the membrane as a helical segment. At 175–196 (RATHQEAINCYAKETCCDFFTN) the chain is on the extracellular side. The chain crosses the membrane as a helical span at residues 197–220 (QAYAIASSIVSFYLPLVVMVFVYS). The Cytoplasmic segment spans residues 221 to 274 (RVFQVAQRQLQKIDRSEGRFHAQNLSQVEQDGRSGHGHRRSSKFCLKEHKALKT). A Phosphoserine modification is found at Ser246. Phosphoserine; by PKA is present on residues Ser261 and Ser262. Cys265 is lipidated: S-palmitoyl cysteine. Residues 275-298 (LGIIMGTFTLCWLPFFIVNIVHVI) form a helical membrane-spanning segment. The Extracellular segment spans residues 299–305 (QDNLIPK). The helical transmembrane segment at 306 to 329 (EVYILLNWVGYVNSAFNPLIYCRS) threads the bilayer. Topologically, residues 330–415 (PDFRIAFQEL…RNCSTNDSLL (86 aa)) are cytoplasmic. Cys341 is lipidated: S-palmitoyl cysteine. 2 positions are modified to phosphoserine; by PKA: Ser345 and Ser346. Residue Ser355 is modified to Phosphoserine; by BARK. Residues 379 to 415 (SELLCEDPPGTEDRQGTVPSDSVDSQGRNCSTNDSLL) form a disordered region. 4-hydroxyproline is present on residues Pro387 and Pro397. Polar residues predominate over residues 395–415 (TVPSDSVDSQGRNCSTNDSLL). The short motif at 412–415 (DSLL) is the PDZ-binding element.

This sequence belongs to the G-protein coupled receptor 1 family. Adrenergic receptor subfamily. ADRB2 sub-subfamily. Binds NHERF1 and GPRASP1. Interacts with ARRB1 and ARRB2. Interacts with SRC. Interacts with USP20 and USP33. Interacts with VHL; the interaction, which is increased on hydroxylation of ADRB2, ubiquitinates ADRB2 leading to its degradation. Interacts with EGLN3; the interaction hydroxylates ADRB2 facilitating VHL-E3 ligase-mediated ubiquitination. Interacts (via PDZ-binding motif) with SNX27 (via PDZ domain); the interaction is required when endocytosed to prevent degradation in lysosomes and promote recycling to the plasma membrane. Interacts with CNIH4. Interacts with ARRDC3. Interacts with NEDD4. Interacts with MARCHF2. In terms of processing, palmitoylated; may reduce accessibility of Ser-345 and Ser-346 by anchoring Cys-341 to the plasma membrane. Agonist stimulation promotes depalmitoylation and further allows Ser-345 and Ser-346 phosphorylation. Post-translationally, phosphorylated by PKA and BARK upon agonist stimulation, which mediates homologous desensitization of the receptor. PKA-mediated phosphorylation seems to facilitate phosphorylation by BARK. Phosphorylation of Tyr-141 is induced by insulin and leads to supersensitization of the receptor. In terms of processing, polyubiquitinated. Agonist-induced ubiquitination leads to sort internalized receptors to the lysosomes for degradation. Deubiquitination by USP20 and USP33, leads to ADRB2 recycling and resensitization after prolonged agonist stimulation. USP20 and USP33 are constitutively associated and are dissociated immediately after agonist stimulation. Ubiquitination by the VHL-E3 ligase complex is oxygen-dependent. Post-translationally, hydroxylation by EGLN3 occurs only under normoxia and increases the interaction with VHL and the subsequent ubiquitination and degradation of ADRB2. Palmitoylated. Mainly palmitoylated at Cys-341. Palmitoylation may reduce accessibility of phosphorylation sites by anchoring the receptor to the plasma membrane. Agonist stimulation promotes depalmitoylation and further allows Ser-345 and Ser-346 phosphorylation. Also undergoes transient, ligand-induced palmitoylation at Cys-265 probably by ZDHHC9, ZDHHC14 and ZDHHC18 within the Golgi. Palmitoylation at Cys-265 requires phosphorylation by PKA and receptor internalization and stabilizes the receptor. Could be depalmitoylated by LYPLA1 at the plasma membrane.

The protein resides in the cell membrane. It localises to the early endosome. It is found in the golgi apparatus. Beta-adrenergic receptors mediate the catecholamine-induced activation of adenylate cyclase through the action of G proteins. The beta-2-adrenergic receptor binds epinephrine with an approximately 30-fold greater affinity than it does norepinephrine. This Canis lupus familiaris (Dog) protein is Beta-2 adrenergic receptor (ADRB2).